A 203-amino-acid polypeptide reads, in one-letter code: dITP/XTP pyrophosphatase (203 aa).

8-13 (TANKGK) contributes to the substrate binding site. Residues Glu41 and Asp70 each coordinate Mg(2+). The Proton acceptor role is filled by Asp70. Residues Ser71, 153-156 (FGYD), Lys176, and 181-182 (HR) each bind substrate.

It belongs to the HAM1 NTPase family. Homodimer. The cofactor is Mg(2+).

It catalyses the reaction XTP + H2O = XMP + diphosphate + H(+). The enzyme catalyses dITP + H2O = dIMP + diphosphate + H(+). It carries out the reaction ITP + H2O = IMP + diphosphate + H(+). Functionally, pyrophosphatase that catalyzes the hydrolysis of nucleoside triphosphates to their monophosphate derivatives, with a high preference for the non-canonical purine nucleotides XTP (xanthosine triphosphate), dITP (deoxyinosine triphosphate) and ITP. Seems to function as a house-cleaning enzyme that removes non-canonical purine nucleotides from the nucleotide pool, thus preventing their incorporation into DNA/RNA and avoiding chromosomal lesions. This Listeria innocua serovar 6a (strain ATCC BAA-680 / CLIP 11262) protein is dITP/XTP pyrophosphatase.